Consider the following 98-residue polypeptide: Large ribosomal subunit protein uL23 (98 aa).

Belongs to the universal ribosomal protein uL23 family. In terms of assembly, part of the 50S ribosomal subunit. Contacts protein L29, and trigger factor when it is bound to the ribosome.

One of the early assembly proteins it binds 23S rRNA. One of the proteins that surrounds the polypeptide exit tunnel on the outside of the ribosome. Forms the main docking site for trigger factor binding to the ribosome. The polypeptide is Large ribosomal subunit protein uL23 (Frankia alni (strain DSM 45986 / CECT 9034 / ACN14a)).